The sequence spans 666 residues: UvrABC system protein B (666 aa).

Residues 26–414 (DSFQKGEKKV…KVVEQIIRPT (389 aa)) enclose the Helicase ATP-binding domain. An ATP-binding site is contributed by 39-46 (GVTGSGKT). The Beta-hairpin signature appears at 92 to 115 (YYDYYQPEAYVPSSDTFIEKDSSI). The region spanning 429–591 (QIEDLLVEIR…ITPLTIKKEV (163 aa)) is the Helicase C-terminal domain. The UVR domain occupies 625–660 (EVLKEKLREEMMKAAKELDFERAAILRDKMLSIQTE).

The protein belongs to the UvrB family. In terms of assembly, forms a heterotetramer with UvrA during the search for lesions. Interacts with UvrC in an incision complex.

It is found in the cytoplasm. The UvrABC repair system catalyzes the recognition and processing of DNA lesions. A damage recognition complex composed of 2 UvrA and 2 UvrB subunits scans DNA for abnormalities. Upon binding of the UvrA(2)B(2) complex to a putative damaged site, the DNA wraps around one UvrB monomer. DNA wrap is dependent on ATP binding by UvrB and probably causes local melting of the DNA helix, facilitating insertion of UvrB beta-hairpin between the DNA strands. Then UvrB probes one DNA strand for the presence of a lesion. If a lesion is found the UvrA subunits dissociate and the UvrB-DNA preincision complex is formed. This complex is subsequently bound by UvrC and the second UvrB is released. If no lesion is found, the DNA wraps around the other UvrB subunit that will check the other stand for damage. This Leptospira interrogans serogroup Icterohaemorrhagiae serovar copenhageni (strain Fiocruz L1-130) protein is UvrABC system protein B.